The sequence spans 152 residues: Calmodulin (152 aa).

Ala-2 carries the post-translational modification N-acetylalanine. EF-hand domains lie at 10 to 45 (EQIA…LGQN), 46 to 81 (PTEA…KMQD), 83 to 118 (DTEE…LGEK), and 119 to 152 (LTNE…IVRN). Positions 23, 25, 27, 29, 34, 59, 61, 63, 65, 70, 96, 98, 100, 102, 107, 132, 134, 136, 138, and 143 each coordinate Ca(2+).

Belongs to the calmodulin family. In terms of assembly, interacts with cmbB, numA/nucleomorphin, pgkA/phosphoglycerate kinase, and thyB/thymidine kinase in the presence of Ca(2+). Interacts with dwwA in the absence of Ca(2+). In terms of processing, the N-terminus is blocked. Post-translationally, trimethylation of Lys-118 observed in other calmodulins is absent here.

Its subcellular location is the contractile vacuole. Functionally, calmodulin mediates the control of a large number of enzymes, ion channels and other proteins by Ca(2+). Among the enzymes to be stimulated by the calmodulin-Ca(2+) complex are a number of protein kinases and phosphatases. This chain is Calmodulin (calA), found in Dictyostelium discoideum (Social amoeba).